The following is a 562-amino-acid chain: Phosphoglucomutase-1 (562 aa).

M1 is modified (N-acetylmethionine). K16 carries the N6-acetyllysine modification. R23 is an alpha-D-glucose 1,6-bisphosphate binding site. The residue at position 115 (T115) is a Phosphothreonine. S117 lines the alpha-D-glucose 1,6-bisphosphate pocket. The active-site Phosphoserine intermediate is S117. S117 is a binding site for Mg(2+). 2 positions are modified to phosphoserine: S117 and S134. Residue T185 is modified to Phosphothreonine. Phosphoserine occurs at positions 206 and 213. Mg(2+)-binding residues include D288, D290, and D292. Alpha-D-glucose 1,6-bisphosphate-binding residues include D292 and R293. Position 349 is an N6-acetyllysine (K349). Y353 bears the Phosphotyrosine mark. T357 contacts alpha-D-glucose 1,6-bisphosphate. Position 369 is a phosphoserine (S369). Residues E376, S378, and K389 each coordinate alpha-D-glucose 1,6-bisphosphate. A Phosphoserine modification is found at S378. An N6-succinyllysine modification is found at K419. T467 is modified (phosphothreonine; by PAK1). S477, S485, and S505 each carry phosphoserine. At T507 the chain carries Phosphothreonine. Residues S509 and S541 each carry the phosphoserine modification.

This sequence belongs to the phosphohexose mutase family. As to quaternary structure, monomer. The cofactor is Mg(2+). Post-translationally, phosphorylation at Thr-467 by PAK1 significantly enhances enzymatic activity.

It localises to the cytoplasm. The catalysed reaction is alpha-D-glucose 1-phosphate = alpha-D-glucose 6-phosphate. It carries out the reaction O-phospho-L-seryl-[protein] + alpha-D-glucose 1-phosphate = alpha-D-glucose 1,6-bisphosphate + L-seryl-[protein]. The enzyme catalyses alpha-D-glucose 1,6-bisphosphate + L-seryl-[protein] = O-phospho-L-seryl-[protein] + alpha-D-glucose 6-phosphate. Its function is as follows. Catalyzes the reversible isomerization of alpha-D-glucose 1-phosphate to alpha-D-glucose 6-phosphate. The mechanism proceeds via the intermediate compound alpha-D-glucose 1,6-bisphosphate. This enzyme participates in both the breakdown and synthesis of glucose. The protein is Phosphoglucomutase-1 (PGM1) of Macaca fascicularis (Crab-eating macaque).